Reading from the N-terminus, the 508-residue chain is Protein adenylyltransferase Fic (508 aa).

Residues 48 to 70 traverse the membrane as a helical segment; it reads FYRFALFFIAGSFAAFSFHALTS. TPR repeat units follow at residues 132-165 and 166-200; these read ALGA…APKH and PEVL…CPSN. The Inhibitory (S/T)XXXE(G/N) motif motif lies at 257-262; sequence SVGIEG. Residues Glu-261 and 342–345 contribute to the ATP site; that span reads VGGH. The Fido domain maps to 311–446; it reads ITIKDILELH…IRPFVRFIAD (136 aa). Residue His-389 is part of the active site. Residues 393-400, 425-426, and Asn-433 each bind ATP; these read DGNGRTSR and YY.

This sequence belongs to the fic family. As to quaternary structure, homodimer.

The protein resides in the membrane. It catalyses the reaction L-tyrosyl-[protein] + ATP = O-(5'-adenylyl)-L-tyrosyl-[protein] + diphosphate. It carries out the reaction L-threonyl-[protein] + ATP = 3-O-(5'-adenylyl)-L-threonyl-[protein] + diphosphate. The catalysed reaction is 3-O-(5'-adenylyl)-L-threonyl-[protein] + H2O = L-threonyl-[protein] + AMP + H(+). The side chain of Glu-261 determines which of the two opposing activities (AMPylase or de-AMPylase) will take place. In response to endoplasmic reticulum stress, mediates de-AMPylase activity. Adenylyltransferase activity is inhibited by the inhibitory helix present at the N-terminus: Glu-261 binds ATP and competes with ATP-binding at Arg-400, thereby preventing adenylyltransferase activity. In unstressed cells, disengagement of Glu-261 promotes adenylyltransferase activity. Activation dissociates ATP-binding from Glu-261, allowing ordered binding of the entire ATP moiety with the alpha-phosphate in an orientation that is productive for accepting an incoming target hydroxyl side chain. In terms of biological role, protein that can both mediate the addition of adenosine 5'-monophosphate (AMP) to specific residues of target proteins (AMPylation), and the removal of the same modification from target proteins (de-AMPylation), depending on the context. The side chain of Glu-261 determines which of the two opposing activities (AMPylase or de-AMPylase) will take place. Acts as a key regulator of the unfolded protein response (UPR) by mediating AMPylation or de-AMPylation of Hsc70-3/BiP. In unstressed cells, acts as an adenylyltransferase by mediating AMPylation of Hsc70-3/BiP at 'Thr-518', thereby inactivating it. In response to endoplasmic reticulum stress, acts as a phosphodiesterase by mediating removal of ATP (de-AMPylation) from Hsc70-3/BiP at 'Thr-518', leading to restore HSPA5/BiP activity. This Drosophila persimilis (Fruit fly) protein is Protein adenylyltransferase Fic.